Here is a 206-residue protein sequence, read N- to C-terminus: Pyridoxine/pyridoxamine 5'-phosphate oxidase (206 aa).

FMN contacts are provided by residues 49-54 (RMVLLK), 69-70 (YT), K76, and Q98. K54 is a substrate binding site. Substrate-binding residues include Y116, R120, and S124. FMN is bound by residues 133–134 (QS) and W177. A substrate-binding site is contributed by 183 to 185 (RLH). Residue R187 participates in FMN binding.

It belongs to the pyridoxamine 5'-phosphate oxidase family. In terms of assembly, homodimer. Requires FMN as cofactor.

The enzyme catalyses pyridoxamine 5'-phosphate + O2 + H2O = pyridoxal 5'-phosphate + H2O2 + NH4(+). It catalyses the reaction pyridoxine 5'-phosphate + O2 = pyridoxal 5'-phosphate + H2O2. The protein operates within cofactor metabolism; pyridoxal 5'-phosphate salvage; pyridoxal 5'-phosphate from pyridoxamine 5'-phosphate: step 1/1. It participates in cofactor metabolism; pyridoxal 5'-phosphate salvage; pyridoxal 5'-phosphate from pyridoxine 5'-phosphate: step 1/1. Functionally, catalyzes the oxidation of either pyridoxine 5'-phosphate (PNP) or pyridoxamine 5'-phosphate (PMP) into pyridoxal 5'-phosphate (PLP). This chain is Pyridoxine/pyridoxamine 5'-phosphate oxidase, found in Jannaschia sp. (strain CCS1).